We begin with the raw amino-acid sequence, 97 residues long: Mitochondrial import inner membrane translocase subunit Tim8 A (97 aa).

The short motif at 43 to 66 (CWEKCMDKPGPKLDSRAEACFVNC) is the Twin CX3C motif element. Disulfide bonds link C43–C66 and C47–C62. Residues S57, S87, S94, and S96 each carry the phosphoserine modification.

It belongs to the small Tim family. Heterohexamer; composed of 3 copies of TIMM8A and 3 copies of TIMM13, named soluble 70 kDa complex. Associates with the TIM22 complex, whose core is composed of TIMM22. Present at high level in liver and brain, and at lower level in muscle and heart. In CNS sections, it is predominantly present in the soma and the dendritic portion of the Purkinje cells of the cerebellum, but not in the glial cells. Scattered expression also is also detected in the brain stem, olfactory bulb, substantia nigra, hippocampus and striatum (at protein level). Ubiquitously expressed.

The protein resides in the mitochondrion inner membrane. In terms of biological role, mitochondrial intermembrane chaperone that participates in the import and insertion of some multi-pass transmembrane proteins into the mitochondrial inner membrane. Also required for the transfer of beta-barrel precursors from the TOM complex to the sorting and assembly machinery (SAM complex) of the outer membrane. Acts as a chaperone-like protein that protects the hydrophobic precursors from aggregation and guide them through the mitochondrial intermembrane space. The TIMM8-TIMM13 complex mediates the import of proteins such as TIMM23, SLC25A12/ARALAR1 and SLC25A13/ARALAR2, while the predominant TIMM9-TIMM10 70 kDa complex mediates the import of much more proteins. This is Mitochondrial import inner membrane translocase subunit Tim8 A (Timm8a1) from Mus musculus (Mouse).